The sequence spans 177 residues: Coatomer subunit zeta-1 (177 aa).

Residue Met1 is modified to N-acetylmethionine.

Belongs to the adaptor complexes small subunit family. In terms of assembly, oligomeric complex that consists of at least the alpha, beta, beta', gamma, delta, epsilon and zeta subunits.

It localises to the cytoplasm. The protein localises to the golgi apparatus membrane. Its subcellular location is the cytoplasmic vesicle. It is found in the COPI-coated vesicle membrane. Functionally, the coatomer is a cytosolic protein complex that binds to dilysine motifs and reversibly associates with Golgi non-clathrin-coated vesicles, which further mediate biosynthetic protein transport from the ER, via the Golgi up to the trans Golgi network. Coatomer complex is required for budding from Golgi membranes, and is essential for the retrograde Golgi-to-ER transport of dilysine-tagged proteins. The zeta subunit may be involved in regulating the coat assembly and, hence, the rate of biosynthetic protein transport due to its association-dissociation properties with the coatomer complex. The polypeptide is Coatomer subunit zeta-1 (COPZ1) (Bos taurus (Bovine)).